Consider the following 315-residue polypeptide: Small ribosomal subunit protein mS45 (315 aa).

The transit peptide at 1 to 66 directs the protein to the mitochondrion; that stretch reads MRNSVEFSQL…SKYVACNSRS (66 aa).

This sequence belongs to the mitochondrion-specific ribosomal protein mS45 family. Component of the mitochondrial small ribosomal subunit (mt-SSU). Mature yeast 74S mitochondrial ribosomes consist of a small (37S) and a large (54S) subunit. The 37S small subunit contains a 15S ribosomal RNA (15S mt-rRNA) and at least 32 different proteins. The 54S large subunit contains a 21S rRNA (21S mt-rRNA) and at least 45 different proteins.

The protein localises to the mitochondrion. Component of the mitochondrial ribosome (mitoribosome), a dedicated translation machinery responsible for the synthesis of mitochondrial genome-encoded proteins, including at least some of the essential transmembrane subunits of the mitochondrial respiratory chain. The mitoribosomes are attached to the mitochondrial inner membrane and translation products are cotranslationally integrated into the membrane. Required for mitochondrial protein synthesis. Has a role in mitochondrial integrity and cell respiration. This Schizosaccharomyces pombe (strain 972 / ATCC 24843) (Fission yeast) protein is Small ribosomal subunit protein mS45 (bot1).